A 296-amino-acid chain; its full sequence is MTLSPLEKTGILIEALPYIRQFYGKTVVIKYGGHAMVNCELKKAVMQDAVLMHLVGMRPVIVHGGGPEITSMLGRLGKQSQFIQGQRVTDAETMEIVEMVLVGKINKEIVANIHRYGGKAIGLCGKDGHLIEARKQVAHIQKDGEEMDLDLGYVGQVERVNPGIIETVIAEGYIPVVAPIGVGPEGESYNINADLVAGELAVALQADKLVLLTDVEGILADRDDPASLISSLEVGRVPELIQQGVIAGGMIPKVNCCIRALEGGVKKTHIIDGRIPHSILLEVFTDTGVGTMVVPG.

Substrate-binding positions include G65–G66, R87, and N190.

The protein belongs to the acetylglutamate kinase family. ArgB subfamily.

The protein resides in the cytoplasm. It catalyses the reaction N-acetyl-L-glutamate + ATP = N-acetyl-L-glutamyl 5-phosphate + ADP. Its pathway is amino-acid biosynthesis; L-arginine biosynthesis; N(2)-acetyl-L-ornithine from L-glutamate: step 2/4. Functionally, catalyzes the ATP-dependent phosphorylation of N-acetyl-L-glutamate. This is Acetylglutamate kinase from Moorella thermoacetica (strain ATCC 39073 / JCM 9320).